A 176-amino-acid polypeptide reads, in one-letter code: Nucleoside triphosphate/diphosphate phosphatase (176 aa).

The Proton donor role is filled by Arg-23. Residues Asn-87, Asp-103, Asp-105, Asp-107, Asp-120, and Glu-123 each coordinate Mg(2+).

The protein belongs to the Ntdp family. Requires Mg(2+) as cofactor.

It catalyses the reaction a ribonucleoside 5'-triphosphate + H2O = a ribonucleoside 5'-diphosphate + phosphate + H(+). The enzyme catalyses a ribonucleoside 5'-diphosphate + H2O = a ribonucleoside 5'-phosphate + phosphate + H(+). Functionally, has nucleoside phosphatase activity towards nucleoside triphosphates and nucleoside diphosphates. The chain is Nucleoside triphosphate/diphosphate phosphatase from Bacillus cytotoxicus (strain DSM 22905 / CIP 110041 / 391-98 / NVH 391-98).